A 105-amino-acid polypeptide reads, in one-letter code: uncharacterized protein (105 aa).

This is an uncharacterized protein from Saccharomyces cerevisiae (strain ATCC 204508 / S288c) (Baker's yeast).